The chain runs to 341 residues: Phosphate acyltransferase (341 aa).

Belongs to the PlsX family. In terms of assembly, homodimer. Probably interacts with PlsY.

It localises to the cytoplasm. The catalysed reaction is a fatty acyl-[ACP] + phosphate = an acyl phosphate + holo-[ACP]. It participates in lipid metabolism; phospholipid metabolism. Functionally, catalyzes the reversible formation of acyl-phosphate (acyl-PO(4)) from acyl-[acyl-carrier-protein] (acyl-ACP). This enzyme utilizes acyl-ACP as fatty acyl donor, but not acyl-CoA. In Chlorobaculum parvum (strain DSM 263 / NCIMB 8327) (Chlorobium vibrioforme subsp. thiosulfatophilum), this protein is Phosphate acyltransferase.